A 530-amino-acid chain; its full sequence is Na(+)/H(+) antiporter NhaB (530 aa).

12 consecutive transmembrane segments (helical) span residues 13–33 (FLGKAPDWYKIAILSFLVINP), 34–54 (LVFFFVDPFTAGWLLVVEFIF), 90–110 (LVANIEVLLLLVFMVAGIYFM), 121–141 (ILIGIKSKTALSVAFCFTAAF), 145–165 (FLDALTVIAVVISVAVGFYAI), 205–225 (LLIHAGVGTALGGVMTMVGEP), 241–261 (FIIRMLPITAPVFICGILTCI), 306–326 (GLIAVWLIVGLALHLAAVGLI), 327–347 (GLSVIILATAFTGVIEEHSMG), 351–371 (EEALPFTALLAVFFAVVAVII), 455–475 (GQAAFLFLLTSALAPLIQLSY), and 481–501 (MALPYTIVLALVGMFGIIFFL).

It belongs to the NhaB Na(+)/H(+) (TC 2.A.34) antiporter family.

The protein resides in the cell inner membrane. The enzyme catalyses 2 Na(+)(in) + 3 H(+)(out) = 2 Na(+)(out) + 3 H(+)(in). In terms of biological role, na(+)/H(+) antiporter that extrudes sodium in exchange for external protons. The sequence is that of Na(+)/H(+) antiporter NhaB from Aliivibrio fischeri (strain MJ11) (Vibrio fischeri).